Reading from the N-terminus, the 133-residue chain is ATP synthase epsilon chain, chloroplastic (133 aa).

It belongs to the ATPase epsilon chain family. As to quaternary structure, F-type ATPases have 2 components, CF(1) - the catalytic core - and CF(0) - the membrane proton channel. CF(1) has five subunits: alpha(3), beta(3), gamma(1), delta(1), epsilon(1). CF(0) has three main subunits: a, b and c.

Its subcellular location is the plastid. The protein localises to the chloroplast thylakoid membrane. In terms of biological role, produces ATP from ADP in the presence of a proton gradient across the membrane. This is ATP synthase epsilon chain, chloroplastic from Vitis vinifera (Grape).